A 513-amino-acid polypeptide reads, in one-letter code: Activin receptor type-2A (513 aa).

The first 19 residues, M1 to G19, serve as a signal peptide directing secretion. The Extracellular portion of the chain corresponds to A20–P135. Disulfide bonds link C30–C60, C50–C78, C85–C104, C91–C103, and C105–C110. N-linked (GlcNAc...) asparagine glycans are attached at residues N43 and N66. Residues Y136 to Y161 form a helical membrane-spanning segment. Topologically, residues R162–L513 are cytoplasmic. The region spanning L192–L485 is the Protein kinase domain. ATP is bound by residues K198–V206 and K219. Catalysis depends on D322, which acts as the Proton acceptor.

Belongs to the protein kinase superfamily. TKL Ser/Thr protein kinase family. TGFB receptor subfamily. As to quaternary structure, part of a complex consisting of MAGI2/ARIP1, ACVR2A, ACVR1B and SMAD3. Interacts with MAGI2/ARIP1. Interacts with type I receptor ACVR1. Interacts with TSC22D1/TSC-22. Interacts with activin A/INHBA. Mg(2+) is required as a cofactor. Mn(2+) serves as cofactor.

The protein resides in the cell membrane. The enzyme catalyses L-threonyl-[receptor-protein] + ATP = O-phospho-L-threonyl-[receptor-protein] + ADP + H(+). The catalysed reaction is L-seryl-[receptor-protein] + ATP = O-phospho-L-seryl-[receptor-protein] + ADP + H(+). In terms of biological role, on ligand binding, forms a receptor complex consisting of two type II and two type I transmembrane serine/threonine kinases. Type II receptors phosphorylate and activate type I receptors which autophosphorylate, then bind and activate SMAD transcriptional regulators. Receptor for activin A, activin B and inhibin A. Mediates induction of adipogenesis by GDF6. In Ovis aries (Sheep), this protein is Activin receptor type-2A (ACVR2A).